A 1062-amino-acid chain; its full sequence is Probable sucrose-phosphate synthase 3 (1062 aa).

Residues 113 to 122 are compositionally biased toward basic and acidic residues; that stretch reads EREQGRRDAT. The segment at 113–141 is disordered; that stretch reads EREQGRRDATEDLSEDLSEGEKGDGLGEI. Residues S126, S130, and S156 each carry the phosphoserine modification. Positions 715-735 are disordered; that stretch reads MDGDKPSLNGSLEPNSADPVK.

It belongs to the glycosyltransferase 1 family. In terms of assembly, homodimer or homotetramer.

The catalysed reaction is beta-D-fructose 6-phosphate + UDP-alpha-D-glucose = sucrose 6(F)-phosphate + UDP + H(+). Its pathway is glycan biosynthesis; sucrose biosynthesis; sucrose from D-fructose 6-phosphate and UDP-alpha-D-glucose: step 1/2. Its activity is regulated as follows. Activity is regulated by phosphorylation and moderated by concentration of metabolites and light. Functionally, plays a role in photosynthetic sucrose synthesis by catalyzing the rate-limiting step of sucrose biosynthesis from UDP-glucose and fructose- 6-phosphate. Involved in the regulation of carbon partitioning in the leaves of plants. May regulate the synthesis of sucrose and therefore play a major role as a limiting factor in the export of photoassimilates out of the leaf. Plays a role for sucrose availability that is essential for plant growth and fiber elongation. This is Probable sucrose-phosphate synthase 3 (SPS3) from Arabidopsis thaliana (Mouse-ear cress).